The sequence spans 525 residues: Erythropoietin receptor (525 aa).

An N-terminal signal peptide occupies residues 1-32; it reads MGAPSSLLFSTAHWRTVPFLLAFWVLLSTGTA. The Extracellular portion of the chain corresponds to 33–249; it reads EDPTMTPEFL…TIATIIDLRL (217 aa). C58 and C68 form a disulfide bridge. 4 N-linked (GlcNAc...) asparagine glycosylation sites follow: N77, N100, N149, and N185. Residues C91 and C107 are joined by a disulfide bond. Residues 146–246 enclose the Fibronectin type-III domain; the sequence is PPLNVTVKEK…APITIATIID (101 aa). The short motif at 232–236 is the WSXWS motif element; that stretch reads WSDWT. The chain crosses the membrane as a helical span at residues 250–270; the sequence is LLLLSIAIFVALIAGVGVYIF. The Cytoplasmic portion of the chain corresponds to 271 to 525; the sequence is MRHGMYLKHK…NFLAPIYSQS (255 aa). A Box 1 motif motif is present at residues 281-289; sequence VWPQVPTPE. Disordered stretches follow at residues 434–459 and 492–513; these read APRM…QSIP and LDMS…QNSP. The segment covering 447-459 has biased composition (polar residues); that stretch reads ENSVSSDGKQSIP. Residues 487–492 carry the ITIM motif motif; it reads LKYAYL.

This sequence belongs to the type I cytokine receptor family. Type 1 subfamily. Expressed in the ventral blood island from stage 28 through to stage 36. Expressed in the circulating blood by stage 40. In the adult, highly expressed in peripheral blood cells including immature erythrocytes and basophils, and moderately expressed in the hematopoietic organs: liver, kidney and spleen. Expressed at a low level in adult brain.

The protein localises to the cell membrane. Functionally, receptor for erythropoietin. Mediates erythropoietin-induced erythroblast proliferation and differentiation. The protein is Erythropoietin receptor of Xenopus laevis (African clawed frog).